We begin with the raw amino-acid sequence, 270 residues long: 2-epi-5-epi-valiolone 7-phosphate 2-epimerase (270 aa).

Residues E143 and E236 each act as proton donor/acceptor in the active site.

This sequence belongs to the hyi family.

The enzyme catalyses 2-epi-5-epi-valiolone 7-phosphate = 5-epi-valiolone 7-phosphate. Its function is as follows. Involved in the biosynthesis of the alpha-glucosidase inhibitor acarbose. Catalyzes the 2-epimerisation of 2-epi-5-epivaliolone 7-phosphate to yield 5-epi-valiolone 7-phosphate. This chain is 2-epi-5-epi-valiolone 7-phosphate 2-epimerase (acbO), found in Actinoplanes sp. (strain ATCC 31044 / CBS 674.73 / SE50/110).